Reading from the N-terminus, the 628-residue chain is Probable potassium transport system protein Kup (628 aa).

12 helical membrane passes run 15-35, 49-69, 106-126, 141-161, 174-194, 210-230, 254-274, 295-315, 343-363, 369-389, 398-418, and 425-445; these read FAAEIGALGVVFGDIGTSPLY, FLGGDVLGLLSLITWSIILSV, WYLLAAGLLGAAMLIGDGVLT, ISPELEHWVVTLTVLVLLAVF, FFGPIMLMWFGSLGALGVYGI, IMLMVNHPGLAGVILGACFLA, LFVAMPALLLNYFGQGAILLV, LLFLATAATVIASQSIITGVF, IYVGRLNWLLMIACIAVVLGF, LASAYGIAVAFAMVTTSILFI, WPAPAVWAMATGLLTIDFAFA, and IHDGGWLPLSIAAAIIFVMVS.

This sequence belongs to the HAK/KUP transporter (TC 2.A.72) family.

Its subcellular location is the cell inner membrane. It catalyses the reaction K(+)(in) + H(+)(in) = K(+)(out) + H(+)(out). Its function is as follows. Transport of potassium into the cell. Likely operates as a K(+):H(+) symporter. The sequence is that of Probable potassium transport system protein Kup from Xanthobacter autotrophicus (strain ATCC BAA-1158 / Py2).